The sequence spans 912 residues: Phosphoenolpyruvate carboxylase (912 aa).

Residues histidine 138 and lysine 575 contribute to the active site.

Belongs to the PEPCase type 1 family. Mg(2+) serves as cofactor.

The catalysed reaction is oxaloacetate + phosphate = phosphoenolpyruvate + hydrogencarbonate. Its function is as follows. Forms oxaloacetate, a four-carbon dicarboxylic acid source for the tricarboxylic acid cycle. In Lactobacillus acidophilus (strain ATCC 700396 / NCK56 / N2 / NCFM), this protein is Phosphoenolpyruvate carboxylase.